Consider the following 253-residue polypeptide: Glucosamine-6-phosphate deaminase (253 aa).

Aspartate 65 functions as the Proton acceptor; for enolization step in the catalytic mechanism. The active-site For ring-opening step is the asparagine 133. Histidine 135 functions as the Proton acceptor; for ring-opening step in the catalytic mechanism. The For ring-opening step role is filled by glutamate 140.

The protein belongs to the glucosamine/galactosamine-6-phosphate isomerase family. NagB subfamily.

The enzyme catalyses alpha-D-glucosamine 6-phosphate + H2O = beta-D-fructose 6-phosphate + NH4(+). Its pathway is amino-sugar metabolism; N-acetylneuraminate degradation; D-fructose 6-phosphate from N-acetylneuraminate: step 5/5. Functionally, catalyzes the reversible isomerization-deamination of glucosamine 6-phosphate (GlcN6P) to form fructose 6-phosphate (Fru6P) and ammonium ion. The polypeptide is Glucosamine-6-phosphate deaminase (Corynebacterium glutamicum (strain R)).